The primary structure comprises 694 residues: Glycine--tRNA ligase beta subunit (694 aa).

It belongs to the class-II aminoacyl-tRNA synthetase family. Tetramer of two alpha and two beta subunits.

The protein localises to the cytoplasm. It catalyses the reaction tRNA(Gly) + glycine + ATP = glycyl-tRNA(Gly) + AMP + diphosphate. This chain is Glycine--tRNA ligase beta subunit, found in Acidithiobacillus ferrooxidans (strain ATCC 23270 / DSM 14882 / CIP 104768 / NCIMB 8455) (Ferrobacillus ferrooxidans (strain ATCC 23270)).